Consider the following 65-residue polypeptide: Large ribosomal subunit protein bL33c (65 aa).

This sequence belongs to the bacterial ribosomal protein bL33 family.

It is found in the plastid. Its subcellular location is the chloroplast. The sequence is that of Large ribosomal subunit protein bL33c from Pyropia yezoensis (Susabi-nori).